The chain runs to 119 residues: Phosphoribosyl-AMP cyclohydrolase (119 aa).

Asp-77 contributes to the Mg(2+) binding site. Cys-78 serves as a coordination point for Zn(2+). Mg(2+) contacts are provided by Asp-79 and Asp-81. Zn(2+) contacts are provided by Cys-94 and Cys-101.

Belongs to the PRA-CH family. As to quaternary structure, homodimer. The cofactor is Mg(2+). Zn(2+) serves as cofactor.

Its subcellular location is the cytoplasm. It catalyses the reaction 1-(5-phospho-beta-D-ribosyl)-5'-AMP + H2O = 1-(5-phospho-beta-D-ribosyl)-5-[(5-phospho-beta-D-ribosylamino)methylideneamino]imidazole-4-carboxamide. Its pathway is amino-acid biosynthesis; L-histidine biosynthesis; L-histidine from 5-phospho-alpha-D-ribose 1-diphosphate: step 3/9. Its function is as follows. Catalyzes the hydrolysis of the adenine ring of phosphoribosyl-AMP. In Dinoroseobacter shibae (strain DSM 16493 / NCIMB 14021 / DFL 12), this protein is Phosphoribosyl-AMP cyclohydrolase.